The sequence spans 142 residues: Peptide methionine sulfoxide reductase MsrB (142 aa).

The MsrB domain occupies 2 to 125 (LKKDKSELTD…NSAAIQFIPY (124 aa)). Catalysis depends on C114, which acts as the Nucleophile.

It belongs to the MsrB Met sulfoxide reductase family.

The enzyme catalyses L-methionyl-[protein] + [thioredoxin]-disulfide + H2O = L-methionyl-(R)-S-oxide-[protein] + [thioredoxin]-dithiol. This chain is Peptide methionine sulfoxide reductase MsrB, found in Staphylococcus aureus (strain USA300).